The sequence spans 483 residues: Rhamnulokinase (483 aa).

11 to 15 (ASSGR) provides a ligand contact to ATP. Residues G79 and 234 to 236 (HDT) contribute to the substrate site. The active-site Proton acceptor is the D235. T257 provides a ligand contact to ATP. N294 provides a ligand contact to substrate. Q302 is a binding site for ATP. C352 and C369 are oxidised to a cystine. G401 contributes to the ATP binding site.

The protein belongs to the rhamnulokinase family. The cofactor is Mg(2+).

It carries out the reaction L-rhamnulose + ATP = L-rhamnulose 1-phosphate + ADP + H(+). It participates in carbohydrate degradation; L-rhamnose degradation; glycerone phosphate from L-rhamnose: step 2/3. Involved in the catabolism of L-rhamnose (6-deoxy-L-mannose). Catalyzes the transfer of the gamma-phosphate group from ATP to the 1-hydroxyl group of L-rhamnulose to yield L-rhamnulose 1-phosphate. The chain is Rhamnulokinase from Listeria monocytogenes serotype 4b (strain CLIP80459).